Reading from the N-terminus, the 372-residue chain is Alanine racemase (372 aa).

K33 functions as the Proton acceptor; specific for D-alanine in the catalytic mechanism. K33 carries the post-translational modification N6-(pyridoxal phosphate)lysine. Residue R131 participates in substrate binding. The Proton acceptor; specific for L-alanine role is filled by Y261. Residue M309 coordinates substrate.

This sequence belongs to the alanine racemase family. The cofactor is pyridoxal 5'-phosphate.

It carries out the reaction L-alanine = D-alanine. The protein operates within amino-acid biosynthesis; D-alanine biosynthesis; D-alanine from L-alanine: step 1/1. Its function is as follows. Catalyzes the interconversion of L-alanine and D-alanine. May also act on other amino acids. The chain is Alanine racemase (alr) from Salinispora tropica (strain ATCC BAA-916 / DSM 44818 / JCM 13857 / NBRC 105044 / CNB-440).